The primary structure comprises 37 residues: Large ribosomal subunit protein bL36 (37 aa).

The protein belongs to the bacterial ribosomal protein bL36 family.

The polypeptide is Large ribosomal subunit protein bL36 (Rhodococcus erythropolis (strain PR4 / NBRC 100887)).